We begin with the raw amino-acid sequence, 247 residues long: Phycocyanobilin:ferredoxin oxidoreductase (247 aa).

It belongs to the HY2 family.

The enzyme catalyses (2R,3Z)-phycocyanobilin + 4 oxidized [2Fe-2S]-[ferredoxin] = biliverdin IXalpha + 4 reduced [2Fe-2S]-[ferredoxin] + 4 H(+). Its function is as follows. Catalyzes the four-electron reduction of biliverdin IX-alpha (2-electron reduction at both the A and D rings); the reaction proceeds via an isolatable 2-electron intermediate, 181,182-dihydrobiliverdin. The protein is Phycocyanobilin:ferredoxin oxidoreductase of Synechococcus sp. (strain CC9605).